A 611-amino-acid polypeptide reads, in one-letter code: MILMSGQMEQYLFHRGEFRQAYEYFGAHPTRSSTIFRIWAPSAKSVAVVGDFNDWRAREEDYCHKLTNEGIWEVEIKKIKKGNLYKYQIETSWGEKILKSDPYAFYSELRPQTASIVNGKPKFRWADKRWLNNREIGYAKPINIYEVHLGSWKKKEDGTYYNYKEIAELLVEYMLEMNYTHIEIMPIIEYPFDGSWGYQGTGYYSVTSRYGTPDDFMYFVNYFHKNNLGVILDWVPGHFCKDSHGLYRFDGSACYEYEDPSLGENEWGSANFNVSRNEVRSFLLSNLYFWIKEFHIDGIRMDAVSNMLYYKDGLSENKHSVEFLQYLNQSLHEEYPDVMLIAEDSSAWPLVTKYQADGGLGFDFKWNMGWMNDTLKYMEQDPFFRKSHHGKLTFSFMYAFSENFILPLSHDEIVHGKNSILNKMPGYYEDKLAHVKNLYSYQMAHPGKKLNFMGNEFVQGLEWRYYEQLEWQLLKDNKGSQDIQKYVKALNKLYLEEEALWYDGQDGFEWIEHENINENMLIFLRKTPNMEDFIIAVFNFSGKDHEIYPLGVPLEDGEYEVILDSNEKKFGGSYQGRKRKYKSIKKSWNYREQYIEIKIAKNSAVFLKYKK.

The Nucleophile role is filled by Asp302. Glu343 functions as the Proton donor in the catalytic mechanism.

It belongs to the glycosyl hydrolase 13 family. GlgB subfamily. In terms of assembly, monomer.

It catalyses the reaction Transfers a segment of a (1-&gt;4)-alpha-D-glucan chain to a primary hydroxy group in a similar glucan chain.. It functions in the pathway glycan biosynthesis; glycogen biosynthesis. Functionally, catalyzes the formation of the alpha-1,6-glucosidic linkages in glycogen by scission of a 1,4-alpha-linked oligosaccharide from growing alpha-1,4-glucan chains and the subsequent attachment of the oligosaccharide to the alpha-1,6 position. This Fusobacterium nucleatum subsp. nucleatum (strain ATCC 25586 / DSM 15643 / BCRC 10681 / CIP 101130 / JCM 8532 / KCTC 2640 / LMG 13131 / VPI 4355) protein is 1,4-alpha-glucan branching enzyme GlgB.